The sequence spans 456 residues: MQGYIQESDFNLVEEGFLARDLMEEIINEVSQTEDRDAFFVADLGDVVRKHLRFLKALPRVKPFYAVKCNSSKGVVKILAELGAGFDCASKTEIELVQDVGVAPERIIYANPCKQISQIKYAAKNGVQMMTFDNEVELSKVSRSHPNARMVLRIATDDSKSSARLSVKFGAPLKSCRRLLEMAKNLSVDVIGVSFHVGSGCTDSKAYTQAISDARLVFEMASEFGYKMWLLDIGGGFPGTEDSKIRFEEIAGVINPALDMYFPESSDVQIIAEPGRYYVASAFSLAVNVIAKKEVEHSVSDDEENESSKSIMYYVNDGVYGSFNCLVFDHAHPKPILHKKPSPDQPLYTSSLWGPTCDGLDQIAERVQLPELHVGDWLLFENMGAYTIAASSNFNGFQQSPVHYAMPRAAWKAVQLLQRGLQQTEEKENVCTPMSCGWEISDSLCFTRTFAATSII.

The Proton donor; shared with dimeric partner role is filled by Cys357.

The protein belongs to the Orn/Lys/Arg decarboxylase class-II family. ODC antizyme inhibitor subfamily. In terms of assembly, monomer. Interacts with OAZ1; this interaction disrupts the interaction between the antizyme and ODC1. Does not form a heterodimer with ODC1.

The protein resides in the nucleus. The protein localises to the cytoplasm. It localises to the perinuclear region. Its subcellular location is the membrane. It is found in the cytoplasmic vesicle. The protein resides in the endoplasmic reticulum-Golgi intermediate compartment. The protein localises to the golgi apparatus. It localises to the cis-Golgi network. Its subcellular location is the trans-Golgi network. It is found in the cytoplasmic granule. The protein resides in the cell projection. The protein localises to the axon. It localises to the dendrite. Its subcellular location is the perikaryon. Functionally, antizyme inhibitor (AZI) protein that positively regulates ornithine decarboxylase (ODC) activity and polyamine uptake. AZI is an enzymatically inactive ODC homolog that counteracts the negative effect of ODC antizyme (AZ) on ODC activity by competing with ODC for antizyme-binding. Inhibits antizyme-dependent ODC degradation and releases ODC monomers from their inactive complex with antizymes, leading to formation of the catalytically active ODC homodimer and restoring polyamine production. Participates in the morphological integrity of the trans-Golgi network (TGN) and functions as a regulator of intracellular secretory vesicle trafficking. The polypeptide is Antizyme inhibitor 2 (azin2) (Xenopus laevis (African clawed frog)).